The following is a 191-amino-acid chain: Bcl-2-like protein 10 (191 aa).

The short motif at 79 to 98 (LSKDQDFSWSQLVMLLAFAG) is the BH1 element. Lys112 participates in a covalent cross-link: Glycyl lysine isopeptide (Lys-Gly) (interchain with G-Cter in ubiquitin). A BH2 motif is present at residues 144–155 (RLEALGGWDGFC). A helical membrane pass occupies residues 166 to 183 (FWRRLLIQAFLSGFFATA).

This sequence belongs to the Bcl-2 family. In terms of assembly, interacts with BAX. Interacts with BCL2 and BCL2L1/BCLX. Interacts with APAF1. Interacts with ITPR1, ITPR2 and ITPR3; the interaction with ITPR1 is increased in the presence of AHCLY1. Interacts with AHCYL1. Interacts with HIP1R (via ENTH and I/LWEQ domains). Interacts with CASP9. Interacts with BCL2L11/BIM. Interacts with BIK. Interacts with UBQLN4. Interacts with NME2/NM23-H2. Interacts with PMAIP1/NOXA. Interacts with TPX2. Interacts with UBQLN1; in the cytoplasm. Interacts (via BH1 domain) with BECN1. It depends on Ca(2+) as a cofactor. Monoubiquitinated by UBQLN1; results in stabilization of BCL2L10 protein abundance and in relocalization from mitochondria to cytoplasm. As to expression, expressed in multiple embryonic tissues. Restricted to the ovary and testis in adult mice.

The protein resides in the mitochondrion. Its subcellular location is the nucleus membrane. It localises to the endoplasmic reticulum. The protein localises to the cytoplasm. It is found in the cytoskeleton. The protein resides in the spindle. Functionally, promotes cell survival by suppressing apoptosis induced by BAX but not BAK. Increases binding of AHCYL1/IRBIT to ITPR1. Reduces ITPR1-mediated calcium release from the endoplasmic reticulum cooperatively with AHCYL1/IRBIT under normal cellular conditions. Under apoptotic stress conditions, dissociates from ITPR1 and is displaced from mitochondria-associated endoplasmic reticulum membranes, leading to increased Ca(2+) transfer to mitochondria which promotes apoptosis. Required for the correct formation of the microtubule organizing center during oocyte cell division, potentially via regulation of protein abundance and localization of other microtubule organizing center components such as AURKA and TPX2. The polypeptide is Bcl-2-like protein 10 (Mus musculus (Mouse)).